The following is a 356-amino-acid chain: MSIKVLIVDDSAVVRQVLSQVFTAASGIEVMDVANDPYMAMDKMKARWPDVIVLDVEMPRMDGITFLKQLMASRPTPVVICSSLTQKGTDISMQAMAAGAVEVIAKPVSGVKGFLEESSHELVMAVRSAAAARMNRVRVMPSASGNPLETRPKLSADAILSAPTGSNVFATTERIIAIGTSTGGTQALEAVLTQLPRTCPGLAIVQHMPEKFTRSFADRLNSLSQIEVKEADNGDRILPGRALIAPGGKHMMVKRSGAYYQVEVVDGPLVSRHKPSVDVLFRSAAKFAGKNALGIIMTGMGDDGAKGLKEMHDCGAKTIAQDEESCVVFGMPKEAIKLGAADEVMPLELIAKAICR.

Positions 4–121 (KVLIVDDSAV…KGFLEESSHE (118 aa)) constitute a Response regulatory domain. Aspartate 55 is subject to 4-aspartylphosphate. The 188-residue stretch at 169–356 (FATTERIIAI…LELIAKAICR (188 aa)) folds into the CheB-type methylesterase domain. Residues serine 181, histidine 207, and aspartate 303 contribute to the active site.

It belongs to the CheB family. Phosphorylated by CheA. Phosphorylation of the N-terminal regulatory domain activates the methylesterase activity.

It localises to the cytoplasm. It catalyses the reaction [protein]-L-glutamate 5-O-methyl ester + H2O = L-glutamyl-[protein] + methanol + H(+). The catalysed reaction is L-glutaminyl-[protein] + H2O = L-glutamyl-[protein] + NH4(+). Its function is as follows. Involved in chemotaxis. Part of a chemotaxis signal transduction system that modulates chemotaxis in response to various stimuli. Catalyzes the demethylation of specific methylglutamate residues introduced into the chemoreceptors (methyl-accepting chemotaxis proteins or MCP) by CheR. Also mediates the irreversible deamidation of specific glutamine residues to glutamic acid. This Chromobacterium violaceum (strain ATCC 12472 / DSM 30191 / JCM 1249 / CCUG 213 / NBRC 12614 / NCIMB 9131 / NCTC 9757 / MK) protein is Protein-glutamate methylesterase/protein-glutamine glutaminase 2.